The following is a 478-amino-acid chain: Probable cytosolic Fe-S cluster assembly factor CPIJ010948 (478 aa).

Residues cysteine 23, cysteine 69, cysteine 72, cysteine 75, cysteine 189, cysteine 245, cysteine 396, and cysteine 400 each coordinate [4Fe-4S] cluster.

It belongs to the NARF family.

Functionally, component of the cytosolic iron-sulfur (Fe/S) protein assembly machinery. Required for maturation of extramitochondrial Fe/S proteins. This is Probable cytosolic Fe-S cluster assembly factor CPIJ010948 from Culex quinquefasciatus (Southern house mosquito).